Reading from the N-terminus, the 917-residue chain is Methionine--tRNA ligase, cytoplasmic (917 aa).

The 'HIGH' region signature appears at 44–54 (PYVNNVPHLGN). The 'KMSKS' region signature appears at 367-371 (KFSKS). An ATP-binding site is contributed by K370. Disordered stretches follow at residues 591–623 (GSQD…GDKK) and 702–749 (SCTP…AAAA). A compositionally biased stretch (basic and acidic residues) spans 614–623 (PTKDKKGDKK). Positions 702 to 713 (SCTPTPTSTPAS) are enriched in low complexity. Over residues 732–741 (EPKKAKEQKK) the composition is skewed to basic and acidic residues. The 102-residue stretch at 756–857 (DVGRLDMRVG…ADSKPGTPVV (102 aa)) folds into the tRNA-binding domain.

Belongs to the class-I aminoacyl-tRNA synthetase family.

The protein resides in the cytoplasm. It carries out the reaction tRNA(Met) + L-methionine + ATP = L-methionyl-tRNA(Met) + AMP + diphosphate. In Caenorhabditis elegans, this protein is Methionine--tRNA ligase, cytoplasmic.